A 491-amino-acid chain; its full sequence is Aspartyl/glutamyl-tRNA(Asn/Gln) amidotransferase subunit B (491 aa).

Belongs to the GatB/GatE family. GatB subfamily. As to quaternary structure, heterotrimer of A, B and C subunits.

The enzyme catalyses L-glutamyl-tRNA(Gln) + L-glutamine + ATP + H2O = L-glutaminyl-tRNA(Gln) + L-glutamate + ADP + phosphate + H(+). It carries out the reaction L-aspartyl-tRNA(Asn) + L-glutamine + ATP + H2O = L-asparaginyl-tRNA(Asn) + L-glutamate + ADP + phosphate + 2 H(+). Functionally, allows the formation of correctly charged Asn-tRNA(Asn) or Gln-tRNA(Gln) through the transamidation of misacylated Asp-tRNA(Asn) or Glu-tRNA(Gln) in organisms which lack either or both of asparaginyl-tRNA or glutaminyl-tRNA synthetases. The reaction takes place in the presence of glutamine and ATP through an activated phospho-Asp-tRNA(Asn) or phospho-Glu-tRNA(Gln). This is Aspartyl/glutamyl-tRNA(Asn/Gln) amidotransferase subunit B from Paraburkholderia phymatum (strain DSM 17167 / CIP 108236 / LMG 21445 / STM815) (Burkholderia phymatum).